A 1588-amino-acid chain; its full sequence is Paternally-expressed gene 3 protein (1588 aa).

The region spanning 46-128 is the SCAN box domain; sequence HQRFRNLIYV…TLLENYKEMY (83 aa). Disordered stretches follow at residues 128 to 231, 265 to 304, and 317 to 347; these read YQPE…YQNV, GHSH…RRGI, and KFIK…MSDD. A compositionally biased stretch (acidic residues) spans 129–142; that stretch reads QPEDDNNSDVTSDD. 4 stretches are compositionally biased toward basic and acidic residues: residues 143-152, 160-181, 205-224, and 293-304; these read DMTRNRRESS, FSDR…DRWS, FEMD…RSQD, and PEAKKSTHRRGI. 3 consecutive C2H2-type zinc fingers follow at residues 452–474, 505–527, and 563–585; these read YVCD…QIMH, FECK…RKIH, and YECR…QKIH. The span at 588-607 shows a compositional bias: basic and acidic residues; it reads DDKDNEREHERERERERGET. A disordered region spans residues 588 to 608; it reads DDKDNEREHERERERERGETF. The segment at 627–649 adopts a C2H2-type 4 zinc-finger fold; that stretch reads YECKVCGETFLHSSSLKEHQKIH. Disordered regions lie at residues 839–889 and 905–929; these read VASK…SKNR and QKSV…SSNV. Basic and acidic residues predominate over residues 868-881; the sequence is LNDKRQKIPARENP. The C2H2-type 5 zinc-finger motif lies at 969–991; it reads YECQECGECFAHSSDLTEHQKIH. Positions 1056–1104 are disordered; that stretch reads EKSHGEESQGENTDGEETHSEETHGQETIEDPVIQGSDMEDPQKDDPDD. Over residues 1071-1082 the composition is skewed to basic and acidic residues; the sequence is EETHSEETHGQE. 5 consecutive C2H2-type zinc fingers follow at residues 1107–1129, 1163–1185, 1225–1247, 1282–1304, and 1332–1354; these read YECE…QKVH, YECP…QRIH, IRCL…MRLH, FECA…VTVH, and YECK…KELH. The segment covering 1396-1415 has biased composition (acidic residues); it reads EPEVEAAEPEVEAAEPEVEA. Residues 1396 to 1495 form a disordered region; sequence EPEVEAAEPE…GIEDPEEGED (100 aa). A run of 7 repeats spans residues 1397–1403, 1404–1410, 1411–1417, 1418–1422, 1425–1429, 1432–1436, and 1439–1443. The 3 X 7 AA repeat of P-E-V-E-A-A-E stretch occupies residues 1397-1417; sequence PEVEAAEPEVEAAEPEVEAAE. The tract at residues 1418-1443 is 4 X 5 AA repeat of P-X-G-E-A; that stretch reads PNGEAEGPDGEAAEPIGEAGQPNGEA. 2 stretches are compositionally biased toward acidic residues: residues 1449 to 1466 and 1475 to 1495; these read DADE…ERAE and PEGD…EGED. 2 C2H2-type zinc fingers span residues 1505-1527 and 1564-1586; these read YDCH…LKTH and FKCD…QNTH.

Belongs to the krueppel C2H2-type zinc-finger protein family. In terms of assembly, homodimer. Interacts with SIAH1A and SIAH2. Interacts with TRAF2. As to expression, brain, glial cells, astrocytes, embryo, placenta, testis, ovary and uterus. In the placenta it is found in the layer of villous cytotrophoblast cells while in the ovary it is found in the cells of the ovarian stroma including the thecal layers around the follicles. Expression is highly repressed in glioma cell lines.

It localises to the nucleus. Its subcellular location is the cytoplasm. Induces apoptosis in cooperation with SIAH1A. Acts as a mediator between p53/TP53 and BAX in a neuronal death pathway that is activated by DNA damage. Acts synergistically with TRAF2 and inhibits TNF induced apoptosis through activation of NF-kappa-B. Possesses a tumor suppressing activity in glioma cells. The chain is Paternally-expressed gene 3 protein (PEG3) from Homo sapiens (Human).